The primary structure comprises 549 residues: Glucose-6-phosphate isomerase (549 aa).

The Proton donor role is filled by Glu-353. Residues His-384 and Lys-513 contribute to the active site.

This sequence belongs to the GPI family.

It is found in the cytoplasm. The catalysed reaction is alpha-D-glucose 6-phosphate = beta-D-fructose 6-phosphate. It participates in carbohydrate biosynthesis; gluconeogenesis. The protein operates within carbohydrate degradation; glycolysis; D-glyceraldehyde 3-phosphate and glycerone phosphate from D-glucose: step 2/4. Catalyzes the reversible isomerization of glucose-6-phosphate to fructose-6-phosphate. This Brucella melitensis biotype 2 (strain ATCC 23457) protein is Glucose-6-phosphate isomerase.